A 240-amino-acid chain; its full sequence is SURF1-like protein (240 aa).

The next 2 helical transmembrane spans lie at 7–23 (VFITFTILISLGFWQLS) and 201–219 (YALTWFGLAISLIVIYVIY).

It belongs to the SURF1 family.

The protein localises to the cell membrane. This chain is SURF1-like protein, found in Rickettsia conorii (strain ATCC VR-613 / Malish 7).